The sequence spans 382 residues: Succinate--CoA ligase [ADP-forming] subunit beta (382 aa).

An ATP-grasp domain is found at 9–240; that stretch reads KELFLRYGVK…PRDITEFEAY (232 aa). Residues lysine 45, 52–54, valine 94, and glutamate 99 contribute to the ATP site; that span reads GRG. Positions 193 and 207 each coordinate Mg(2+). Substrate is bound by residues asparagine 260 and 317 to 319; that span reads GIT.

This sequence belongs to the succinate/malate CoA ligase beta subunit family. As to quaternary structure, heterotetramer of two alpha and two beta subunits. Requires Mg(2+) as cofactor.

The catalysed reaction is succinate + ATP + CoA = succinyl-CoA + ADP + phosphate. It catalyses the reaction GTP + succinate + CoA = succinyl-CoA + GDP + phosphate. It participates in carbohydrate metabolism; tricarboxylic acid cycle; succinate from succinyl-CoA (ligase route): step 1/1. Its function is as follows. Succinyl-CoA synthetase functions in the citric acid cycle (TCA), coupling the hydrolysis of succinyl-CoA to the synthesis of either ATP or GTP and thus represents the only step of substrate-level phosphorylation in the TCA. The beta subunit provides nucleotide specificity of the enzyme and binds the substrate succinate, while the binding sites for coenzyme A and phosphate are found in the alpha subunit. The chain is Succinate--CoA ligase [ADP-forming] subunit beta from Pyrobaculum islandicum (strain DSM 4184 / JCM 9189 / GEO3).